A 208-amino-acid polypeptide reads, in one-letter code: Frataxin, mitochondrial (208 aa).

The N-terminal 40 residues, 1-40, are a transit peptide targeting the mitochondrion; sequence MWTFGRRAAAGLLPRTASRASAWVRNPRGRERIGTCGRRG.

Belongs to the frataxin family. Component of the mitochondrial core iron-sulfur cluster (ISC) complex composed of NFS1, LYRM4, NDUFAB1, ISCU, FXN, and FDX2; this complex is a heterohexamer containing two copies of each monomer. Homodimer. Monomer (probable predominant form). Oligomer. Monomers and polymeric aggregates of &gt;1 MDa have been isolated from mitochondria. A small fraction of heterologous overexpressed recombinant frataxin forms high-molecular weight aggregates that incorporate iron. Interacts with LYRM4. Interacts (via ferrous form) with ISCU; the interaction is possible when both are bound to the dimeric form of the cysteine desulfurase complex (NFS1:LYRM4) and the interaction enhances FXN interaction to the dimeric form of the cysteine desulfurase complex (NFS1:LYRM4). Interacts with FECH; one iron-bound FXN monomer seems to interact with a FECH homodimer. Interacts with SDHA and SDHB. Interacts with ACO2; the interaction is dependent on citrate. Interacts with HSPA9. As to quaternary structure, interacts with ACO1. Interacts with ISCU (cytoplasmic form). Post-translationally, processed in two steps by mitochondrial processing peptidase (MPP). MPP first cleaves the precursor to intermediate form and subsequently converts the intermediate to yield frataxin mature form (frataxin(81-210)) which is the predominant form. The additional forms, frataxin(56-210) and frataxin(78-210), seem to be produced when the normal maturation process is impaired; their physiological relevance is unsure.

The protein localises to the mitochondrion. It is found in the cytoplasm. The protein resides in the cytosol. The enzyme catalyses 4 Fe(2+) + O2 + 4 H(+) = 4 Fe(3+) + 2 H2O. In terms of biological role, functions as an activator of persulfide transfer to the scaffoding protein ISCU as component of the core iron-sulfur cluster (ISC) assembly complex and participates to the [2Fe-2S] cluster assembly. Accelerates sulfur transfer from NFS1 persulfide intermediate to ISCU and to small thiols such as L-cysteine and glutathione leading to persulfuration of these thiols and ultimately sulfide release. Binds ferrous ion and is released from FXN upon the addition of both L-cysteine and reduced FDX2 during [2Fe-2S] cluster assembly. The core iron-sulfur cluster (ISC) assembly complex is involved in the de novo synthesis of a [2Fe-2S] cluster, the first step of the mitochondrial iron-sulfur protein biogenesis. This process is initiated by the cysteine desulfurase complex (NFS1:LYRM4:NDUFAB1) that produces persulfide which is delivered on the scaffold protein ISCU in a FXN-dependent manner. Then this complex is stabilized by FDX2 which provides reducing equivalents to accomplish the [2Fe-2S] cluster assembly. Finally, the [2Fe-2S] cluster is transferred from ISCU to chaperone proteins, including HSCB, HSPA9 and GLRX5. May play a role in the protection against iron-catalyzed oxidative stress through its ability to catalyze the oxidation of Fe(2+) to Fe(3+); the oligomeric form but not the monomeric form has in vitro ferroxidase activity. May be able to store large amounts of iron in the form of a ferrihydrite mineral by oligomerization; however, the physiological relevance is unsure as reports are conflicting and the function has only been shown using heterologous overexpression systems. May function as an iron chaperone protein that protects the aconitase [4Fe-4S]2+ cluster from disassembly and promotes enzyme reactivation. May play a role as a high affinity iron binding partner for FECH that is capable of both delivering iron to ferrochelatase and mediating the terminal step in mitochondrial heme biosynthesis. Modulates the RNA-binding activity of ACO1. May be involved in the cytoplasmic iron-sulfur protein biogenesis. May contribute to oxidative stress resistance and overall cell survival. In Rattus norvegicus (Rat), this protein is Frataxin, mitochondrial.